The following is a 133-amino-acid chain: UPF0102 protein CYA_0680 (133 aa).

It belongs to the UPF0102 family.

The chain is UPF0102 protein CYA_0680 from Synechococcus sp. (strain JA-3-3Ab) (Cyanobacteria bacterium Yellowstone A-Prime).